The sequence spans 381 residues: Transaldolase 2 (381 aa).

Lysine 141 (schiff-base intermediate with substrate) is an active-site residue.

Belongs to the transaldolase family. Type 2 subfamily.

It is found in the cytoplasm. The enzyme catalyses D-sedoheptulose 7-phosphate + D-glyceraldehyde 3-phosphate = D-erythrose 4-phosphate + beta-D-fructose 6-phosphate. It participates in carbohydrate degradation; pentose phosphate pathway; D-glyceraldehyde 3-phosphate and beta-D-fructose 6-phosphate from D-ribose 5-phosphate and D-xylulose 5-phosphate (non-oxidative stage): step 2/3. Functionally, transaldolase is important for the balance of metabolites in the pentose-phosphate pathway. This is Transaldolase 2 (tal2) from Nostoc sp. (strain PCC 7120 / SAG 25.82 / UTEX 2576).